The primary structure comprises 93 residues: YcgL domain-containing protein AHA_2135 (93 aa).

One can recognise a YcgL domain in the interval 1–85; that stretch reads MLCAVYKSRK…PPENLLEQHK (85 aa).

This Aeromonas hydrophila subsp. hydrophila (strain ATCC 7966 / DSM 30187 / BCRC 13018 / CCUG 14551 / JCM 1027 / KCTC 2358 / NCIMB 9240 / NCTC 8049) protein is YcgL domain-containing protein AHA_2135.